Consider the following 1594-residue polypeptide: Calpain-D (1594 aa).

RanBP2-type zinc fingers lie at residues 1 to 35 and 135 to 164; these read MGTI…VRKV and LNRR…VSYL. Disordered regions lie at residues 210 to 256, 371 to 400, 420 to 459, 524 to 543, and 554 to 606; these read EEQH…TAID, EPQQ…NPTQ, ASSS…SSSG, KKKQ…GSGE, and AGLG…RLSG. Positions 215 to 229 are enriched in basic residues; it reads HQLHSQHLHKRHLKG. 2 stretches are compositionally biased toward polar residues: residues 246–255 and 371–385; these read RRTQSLSTAI and EPQQ…QLQR. The residue at position 250 (S250) is a Phosphoserine. Over residues 438 to 459 the composition is skewed to low complexity; it reads NSNSNSSGNSNIINNNSSSSSG. Positions 528–541 are enriched in polar residues; the sequence is QIASESQTNNNTGS. A RanBP2-type 3 zinc finger spans residues 643 to 673; that stretch reads RSKMWICIKCSYAYNRLWLQTCEMCEAKAEQ. The interval 684-703 is disordered; it reads QQQQQQHHHHHLQQQQAEAP. 2 RanBP2-type zinc fingers span residues 704–733 and 744–774; these read RDEP…SKLK and RKGE…HRQP. Disordered regions lie at residues 786-811 and 860-884; these read RPDG…HQSG and SLQQ…GSIV. Polar residues predominate over residues 860-871; sequence SLQQQRNSSSSG. A RanBP2-type 6 zinc finger spans residues 927–956; it reads STKKWQCPACTYDNCAASVVCDICSSPRGL. A Calpain catalytic domain is found at 1014 to 1321; it reads LFVDDSFPPA…FDCIDICKVR (308 aa). Residues C1079, H1245, and N1265 contribute to the active site.

The protein belongs to the peptidase C2 family.

In terms of biological role, has a role in eye development. Functionally, calcium-regulated non-lysosomal thiol-protease. This is Calpain-D (sol) from Drosophila melanogaster (Fruit fly).